Consider the following 349-residue polypeptide: Large ribosomal subunit protein uL2mz, N-terminal part (349 aa).

It belongs to the universal ribosomal protein uL2 family. Component of the mitochondrial ribosome large subunit.

The protein localises to the mitochondrion. The protein is Large ribosomal subunit protein uL2mz, N-terminal part of Arabidopsis thaliana (Mouse-ear cress).